Reading from the N-terminus, the 77-residue chain is DinI-like protein in retron Ec67 (77 aa).

It belongs to the DinI family.

This is DinI-like protein in retron Ec67 from Escherichia coli.